The sequence spans 493 residues: E3 ubiquitin-protein ligase TRIM35 (493 aa).

At M1 the chain carries N-acetylmethionine. 2 positions are modified to phosphoserine: S4 and S8. An RING-type zinc finger spans residues 21–61 (CAVCYDPFRDAVTLRCGHNFCRGCVSRCWEVQVSPTCPVCK). A B box-type zinc finger spans residues 96–137 (RFSRVCRLHRGQLSLFCLEDKELLCCSCQADPRHQGHRVQPV). Zn(2+)-binding residues include C101, H104, C123, and H129. A coiled-coil region spans residues 210-251 (AEETRQKQLLADEKMKQLTEETEVLAHEIERLQMEMKEDDVS). The region spanning 284 to 487 (LGSLQYRVWK…LRICPLHISV (204 aa)) is the B30.2/SPRY domain.

It belongs to the TRIM/RBCC family. As to quaternary structure, interacts with PKM isoform M2, but not isoform M1; this interaction may compete with that between PKM and FGFR1, and hence reduces FGFR1-dependent tyrosine phosphorylation of PKM. Interacts with IRF7; this interaction promotes IRF7 proteasomal degradation. Interacts with TRAF3; this interaction promotes TRAF3 activation.

It localises to the cytoplasm. Its subcellular location is the nucleus. It carries out the reaction S-ubiquitinyl-[E2 ubiquitin-conjugating enzyme]-L-cysteine + [acceptor protein]-L-lysine = [E2 ubiquitin-conjugating enzyme]-L-cysteine + N(6)-ubiquitinyl-[acceptor protein]-L-lysine.. The protein operates within protein modification; protein ubiquitination. Functionally, E3 ubiquitin-protein ligase that participates in multiple biological processes including cell death, glucose metabolism, and in particular, the innate immune response. Mediates 'Lys-63'-linked polyubiquitination of TRAF3 thereby promoting type I interferon production via RIG-I signaling pathway. Can also catalyze 'Lys-48'-linked polyubiquitination and proteasomal degradation of viral proteins such as influenza virus PB2. Acts as a negative feedback regulator of TLR7- and TLR9-triggered signaling. Mechanistically, promotes the 'Lys-48'-linked ubiquitination of IRF7 and induces its degradation via a proteasome-dependent pathway. Reduces FGFR1-dependent tyrosine phosphorylation of PKM, inhibiting PKM-dependent lactate production, glucose metabolism, and cell growth. The sequence is that of E3 ubiquitin-protein ligase TRIM35 (TRIM35) from Homo sapiens (Human).